Consider the following 310-residue polypeptide: Ribonuclease Z (310 aa).

The Zn(2+) site is built by H64, H66, D68, H69, H142, D213, and H271. The active-site Proton acceptor is the D68.

The protein belongs to the RNase Z family. In terms of assembly, homodimer. It depends on Zn(2+) as a cofactor.

It catalyses the reaction Endonucleolytic cleavage of RNA, removing extra 3' nucleotides from tRNA precursor, generating 3' termini of tRNAs. A 3'-hydroxy group is left at the tRNA terminus and a 5'-phosphoryl group is left at the trailer molecule.. In terms of biological role, zinc phosphodiesterase, which displays some tRNA 3'-processing endonuclease activity. Probably involved in tRNA maturation, by removing a 3'-trailer from precursor tRNA. The sequence is that of Ribonuclease Z from Treponema pallidum (strain Nichols).